Consider the following 717-residue polypeptide: Putative amino acid transporter AAT1 (717 aa).

A compositionally biased stretch (basic and acidic residues) spans 1–10 (MREGAFDASR). Residues 1-88 (MREGAFDASR…DRAQTDSRQE (88 aa)) form a disordered region. The segment covering 16–25 (QRPSSLSTAQ) has biased composition (polar residues). The segment covering 26-53 (PPSDSRPPSSSSPPSSSSSSSSASSSSP) has biased composition (low complexity). Residues 74 to 88 (SAEKMDRAQTDSRQE) are compositionally biased toward basic and acidic residues. Transmembrane regions (helical) follow at residues 124–143 (VLTL…PYAM), 149–170 (LIGL…YILM), 196–216 (AVDA…LVFL), 236–253 (HRAA…PLSV), 265–283 (FFPV…YRSL), 303–320 (FKSF…INVC), 341–358 (AALL…LGYL), and 378–402 (LMHV…IPTV). The interval 462-602 (GDAEYGGAEA…REEREEREGQ (141 aa)) is disordered. Residues 463 to 477 (DAEYGGAEAGEATRG) are compositionally biased toward low complexity. Positions 497–519 (ARNRDRSRLHADSERSAGDREGS) are enriched in basic and acidic residues. The segment covering 547 to 558 (GSSSASSRSVDS) has biased composition (low complexity). Residues 584–602 (SGDREAREEREEREEREGQ) show a composition bias toward basic and acidic residues. 3 helical membrane-spanning segments follow: residues 622-638 (VCVA…ALVL), 644-669 (VVGL…YAGI), and 681-702 (LLMV…IIIL).

It belongs to the amino acid/polyamine transporter 2 family.

Its subcellular location is the vacuole membrane. Putative amino acid transporter. Probably transports arginine. Involved in maintaining the osmotic homeostasis of the digestive vacuole. Required for extracellular parasite survival and bradyzoite differentiation. The protein is Putative amino acid transporter AAT1 of Toxoplasma gondii (strain ATCC 50611 / Me49).